The following is a 333-amino-acid chain: Fructose-1,6-bisphosphatase class 1 1 (333 aa).

Residues Glu-81, Asp-100, Leu-102, and Asp-103 each contribute to the Mg(2+) site. Substrate contacts are provided by residues Asp-103 to Ser-106 and Asn-191. Position 263 (Glu-263) interacts with Mg(2+).

The protein belongs to the FBPase class 1 family. As to quaternary structure, homotetramer. It depends on Mg(2+) as a cofactor.

The protein localises to the cytoplasm. The catalysed reaction is beta-D-fructose 1,6-bisphosphate + H2O = beta-D-fructose 6-phosphate + phosphate. The protein operates within carbohydrate biosynthesis; gluconeogenesis. Its activity is regulated as follows. Fructose-1,6-bisphosphatase II is not light-activated. This chain is Fructose-1,6-bisphosphatase class 1 1, found in Cereibacter sphaeroides (Rhodobacter sphaeroides).